The following is a 1092-amino-acid chain: DNA polymerase delta catalytic subunit (1092 aa).

The disordered stretch occupies residues 1 to 71; the sequence is MDGKRKFNGT…SRPPPPELDP (71 aa). The Nuclear localization signal signature appears at 4–19; that stretch reads KRKFNGTSNGHAKKPR. Zn(2+)-binding residues include Cys-997, Cys-1000, Cys-1014, and Cys-1017. A CysA-type zinc finger spans residues 997–1017; the sequence is CLGCKSLMPKGYEQACLCPHC. [4Fe-4S] cluster is bound by residues Cys-1046, Cys-1049, Cys-1059, and Cys-1064. The CysB motif motif lies at 1046-1064; sequence CQRCQESLHEEVICSNRDC.

Belongs to the DNA polymerase type-B family. As to quaternary structure, catalytic component of the DNA polymerase delta complex consisting of three subunits: the catalytic subunit PolD1 and two accessory subunits PolD2/Pol31 and PolD3/Pol32. Within the delta complex, interacts with both PolD2 and PolD3, and is able to interact with PolD2 in the absence of PolD3. Interacts with PCNA and PCNA2. [4Fe-4S] cluster serves as cofactor. It depends on Mg(2+) as a cofactor. Expressed in ovaries (at the protein level). Expressed in embryos (at the protein level).

The protein resides in the nucleus. It localises to the nucleoplasm. The catalysed reaction is DNA(n) + a 2'-deoxyribonucleoside 5'-triphosphate = DNA(n+1) + diphosphate. Its activity is regulated as follows. Inhibited by KCL. Also inhibited by carbonyldiphosphonate, aphidicolin and N-ethylmaleimide (NEM). In terms of biological role, as the catalytic component of the DNA polymerase delta complex, plays a crucial role in high fidelity genome replication, including lagging strand synthesis, DNA recombination and repair. Exhibits both DNA polymerase and 3'- to 5'-exonuclease activities. Required at the nucleus of rapidly dividing embryonic cells to activate genome replication during the earliest cell cycles. Likely to require the presence of accessory proteins PolD2 and PolD3 for full activity. The polypeptide is DNA polymerase delta catalytic subunit (Drosophila melanogaster (Fruit fly)).